We begin with the raw amino-acid sequence, 158 residues long: Protein Smg homolog (158 aa).

Belongs to the Smg family.

This chain is Protein Smg homolog, found in Alteromonas mediterranea (strain DSM 17117 / CIP 110805 / LMG 28347 / Deep ecotype).